The primary structure comprises 473 residues: Siroheme synthase 1 (473 aa).

The tract at residues Met-1–Val-204 is precorrin-2 dehydrogenase /sirohydrochlorin ferrochelatase. NAD(+) contacts are provided by residues Glu-22–Ile-23 and Cys-43–Glu-44. At Ser-128 the chain carries Phosphoserine. The segment at Gly-216–Gly-473 is uroporphyrinogen-III C-methyltransferase. S-adenosyl-L-methionine is bound at residue Pro-225. Catalysis depends on Asp-248, which acts as the Proton acceptor. Catalysis depends on Lys-270, which acts as the Proton donor. Residues Gly-301–Asp-303, Ile-306, Thr-331–Ala-332, Met-382, and Gly-411 contribute to the S-adenosyl-L-methionine site.

This sequence in the N-terminal section; belongs to the precorrin-2 dehydrogenase / sirohydrochlorin ferrochelatase family. In the C-terminal section; belongs to the precorrin methyltransferase family.

It carries out the reaction uroporphyrinogen III + 2 S-adenosyl-L-methionine = precorrin-2 + 2 S-adenosyl-L-homocysteine + H(+). The enzyme catalyses precorrin-2 + NAD(+) = sirohydrochlorin + NADH + 2 H(+). It catalyses the reaction siroheme + 2 H(+) = sirohydrochlorin + Fe(2+). Its pathway is cofactor biosynthesis; adenosylcobalamin biosynthesis; precorrin-2 from uroporphyrinogen III: step 1/1. The protein operates within cofactor biosynthesis; adenosylcobalamin biosynthesis; sirohydrochlorin from precorrin-2: step 1/1. It participates in porphyrin-containing compound metabolism; siroheme biosynthesis; precorrin-2 from uroporphyrinogen III: step 1/1. It functions in the pathway porphyrin-containing compound metabolism; siroheme biosynthesis; siroheme from sirohydrochlorin: step 1/1. Its pathway is porphyrin-containing compound metabolism; siroheme biosynthesis; sirohydrochlorin from precorrin-2: step 1/1. Its function is as follows. Multifunctional enzyme that catalyzes the SAM-dependent methylations of uroporphyrinogen III at position C-2 and C-7 to form precorrin-2 via precorrin-1. Then it catalyzes the NAD-dependent ring dehydrogenation of precorrin-2 to yield sirohydrochlorin. Finally, it catalyzes the ferrochelation of sirohydrochlorin to yield siroheme. The chain is Siroheme synthase 1 from Yersinia pestis (strain Pestoides F).